Reading from the N-terminus, the 141-residue chain is HTH-type transcriptional regulator ZntR (141 aa).

The 70-residue stretch at 1–70 (MYRIGELAKM…LESIRELLSI (70 aa)) folds into the HTH merR-type domain. Positions 4–23 (IGELAKMAEVTPDTIRYYEK) form a DNA-binding region, H-T-H motif. Residues Cys114, Cys115, His119, and Cys124 each coordinate Zn(2+).

As to quaternary structure, homodimer.

In terms of biological role, zinc-responsive transcriptional regulator of zntA. In Escherichia coli O157:H7, this protein is HTH-type transcriptional regulator ZntR (zntR).